Here is a 264-residue protein sequence, read N- to C-terminus: DNA-binding HTH-type transcriptional repressor TrmBL2 (264 aa).

Residues 81 to 113 (LEKFIEEWQERVKEELEAKKKAKEELIELMKPL) adopt a coiled-coil conformation.

This sequence belongs to the transcriptional regulator TrmB family.

The protein localises to the cytoplasm. It is found in the chromosome. An abundant chromosomal protein that seems to be involved in both genome architecture and transcription repression. Incubation with DNA in vitro gives fibrous structures 14.2 +/- 2.1 nm in thickness (naked DNA is 1.83 +/- 0.37 nm); does not significantly compact DNA. Binds to both coding and non-coding regions; binding within gene promoters correlates with decreased transcript levels, while binding within coding regions does not. This is DNA-binding HTH-type transcriptional repressor TrmBL2 from Thermococcus kodakarensis (strain ATCC BAA-918 / JCM 12380 / KOD1) (Pyrococcus kodakaraensis (strain KOD1)).